The primary structure comprises 295 residues: Diaminopimelate epimerase (295 aa).

2 residues coordinate substrate: Asn11 and Asn78. Residue Cys87 is the Proton donor of the active site. Residues 88–89 (GN), Asn163, Asn199, and 220–221 (ER) contribute to the substrate site. Catalysis depends on Cys229, which acts as the Proton acceptor. 230 to 231 (GT) is a binding site for substrate.

This sequence belongs to the diaminopimelate epimerase family. In terms of assembly, homodimer.

The protein localises to the cytoplasm. It catalyses the reaction (2S,6S)-2,6-diaminopimelate = meso-2,6-diaminopimelate. The protein operates within amino-acid biosynthesis; L-lysine biosynthesis via DAP pathway; DL-2,6-diaminopimelate from LL-2,6-diaminopimelate: step 1/1. In terms of biological role, catalyzes the stereoinversion of LL-2,6-diaminopimelate (L,L-DAP) to meso-diaminopimelate (meso-DAP), a precursor of L-lysine and an essential component of the bacterial peptidoglycan. This Mycobacteroides abscessus (strain ATCC 19977 / DSM 44196 / CCUG 20993 / CIP 104536 / JCM 13569 / NCTC 13031 / TMC 1543 / L948) (Mycobacterium abscessus) protein is Diaminopimelate epimerase.